The primary structure comprises 122 residues: MIQMQTILDVADNSGARRVMCIKVLGGSKRRYASVGDIIKVAVKDAAPRGRVKKGDVYNAVVVRTAKGVRRPDGALIKFDNNAAVLLNNKLEPLGTRIFGPVTRELRTERFMKIVSLAPEVL.

This sequence belongs to the universal ribosomal protein uL14 family. As to quaternary structure, part of the 50S ribosomal subunit. Forms a cluster with proteins L3 and L19. In the 70S ribosome, L14 and L19 interact and together make contacts with the 16S rRNA in bridges B5 and B8.

Binds to 23S rRNA. Forms part of two intersubunit bridges in the 70S ribosome. This chain is Large ribosomal subunit protein uL14, found in Neisseria meningitidis serogroup C (strain 053442).